Here is a 380-residue protein sequence, read N- to C-terminus: ER-phagy receptor 1 (380 aa).

In terms of domain architecture, J spans 9–74 (DCYEILQVNH…DKRKWHEKDY (66 aa)). The C2H2-type zinc finger occupies 270–294 (IMCMVCNKNFRSQNQLENHENSKKH). Residues 307–337 (KHAKEAQKNAESNKQPEDAPSESPYSNKVSS) form a disordered region. Ser-344 bears the Phosphoserine mark. Residues 352 to 355 (FTFV) carry the AIM motif. Residues 361-367 (EFYTASE) carry the FFAT motif.

In terms of assembly, interacts (via the AIM motif) with atg8. Interacts (via the FFAT motif) with the vesicle-associated membrane protein-associated protein (VAP) family proteins scs2 and scs22.

The protein resides in the endoplasmic reticulum. Its subcellular location is the preautophagosomal structure. In terms of biological role, reticulophagy receptor required for autophagosomal sequestration of endoplasmic reticulum (ER) membranes during ER stress. Confers resistance to ER stress by promoting the autophagic degradation of the ER (ER-phagy or reticulophagy). Acts as a bridging molecule to mediate the association between atg8 on the autophagic membrane and the vesicle-associated membrane protein-associated proteins (VAPs) scs2 and scs22 on the ER. May play a role in meiosis. The chain is ER-phagy receptor 1 from Schizosaccharomyces pombe (strain 972 / ATCC 24843) (Fission yeast).